The following is a 429-amino-acid chain: Transcriptional adapter 3 (429 aa).

The stretch at 41 to 70 forms a coiled coil; sequence IEELDTLQLELETLLSSASRRLRALEEQRQ. Disordered stretches follow at residues 86–132, 208–257, and 274–308; these read KLEK…TKVQ, EERR…PFGP, and PMED…HTRS. Composition is skewed to basic and acidic residues over residues 208–221 and 230–249; these read EERR…DKKK and LDAK…HEPP. Residues 364-404 adopt a coiled-coil conformation; the sequence is LLKLAREEMRKQELRQRVRVADNEVMEAFRRIMAARQKKRT.

This sequence belongs to the NGG1 family.

It localises to the nucleus. Functionally, functions as a component of the PCAF complex. The PCAF complex is capable of efficiently acetylating histones in a nucleosomal context. This is Transcriptional adapter 3 (tada3) from Danio rerio (Zebrafish).